A 372-amino-acid chain; its full sequence is MPLPDFHVSEPFTLGIELEMQVVNPPGYDLSQDSSMLIDAVKNKITAGEVKHDITESMLELATDVCRDINQAAGQFSAMQKVVLQAAADHHLEICGGGTHPFQKWQRQEVCDNERYQRTLENFGYLIQQATVFGQHVHVGCASGDDAIYLLHGLSRFVPHFIALSAASPYMQGTDTRFASSRPNIFSAFPDNGPMPWVSNWQQFEALFRCLSYTTMIDSIKDLHWDIRPSPHFGTVEVRVMDTPLTLSHAVNMAGLIQATAHWLLTERPFKHQEKDYLLYKFNRFQACRYGLEGVITDPHTGDRRPLTEDTLRLLEKIAPSAHKMGASSAIEALHRQVVSGLNEAQLMRDFVADGGSLIGLVKKHCEIWAGD.

It belongs to the glutamate--cysteine ligase type 2 family. YbdK subfamily. As to quaternary structure, homodimer.

It catalyses the reaction L-cysteine + L-glutamate + ATP = gamma-L-glutamyl-L-cysteine + ADP + phosphate + H(+). Its function is as follows. ATP-dependent carboxylate-amine ligase which exhibits weak glutamate--cysteine ligase activity. This Escherichia coli O139:H28 (strain E24377A / ETEC) protein is Putative glutamate--cysteine ligase 2 (ybdK).